A 336-amino-acid polypeptide reads, in one-letter code: PHD finger protein 11 (336 aa).

Residues 1–20 (MAEETAPPCGPVSTGGSLSP) form a disordered region. The segment at 25-61 (KRTCALCPDGHEWSVIYFAPSANIAAHENCLLYSSGL) adopts a C2HC pre-PHD-type zinc-finger fold. A PHD-type zinc finger spans residues 91-143 (LKCSLCNKGGATVGCDLSSCRKSYHYVCAKKDHAIPQVDEDLGTYKIFCPEHP). Disordered stretches follow at residues 139–179 (CPEH…KKMK) and 303–336 (DPSG…GDSL). The segment covering 303-314 (DPSGSTSGSLLP) has biased composition (low complexity).

Interacts with BRCA1 and RELA.

The protein localises to the nucleus. Its function is as follows. Positive regulator of Th1-type cytokine gene expression. The sequence is that of PHD finger protein 11 (Phf11) from Rattus norvegicus (Rat).